We begin with the raw amino-acid sequence, 149 residues long: Transcriptional regulator MraZ (149 aa).

SpoVT-AbrB domains are found at residues 6-52 and 81-124; these read HAHR…TPPD and SEEV…DKRE.

Belongs to the MraZ family. In terms of assembly, forms oligomers.

The protein resides in the cytoplasm. It localises to the nucleoid. In Maridesulfovibrio salexigens (strain ATCC 14822 / DSM 2638 / NCIMB 8403 / VKM B-1763) (Desulfovibrio salexigens), this protein is Transcriptional regulator MraZ.